Here is a 340-residue protein sequence, read N- to C-terminus: Replication factor C subunit 5 (340 aa).

N-acetylmethionine is present on M1. An ATP-binding site is contributed by 60–67; sequence GPPGTGKT.

It belongs to the activator 1 small subunits family. Subunit of the RFC complex, an heteropentameric complex consisting of a large subunit RFC1 and four small subunits RFC2, RFC3, RFC4 and RFC5; the RFC complex interacts with PCNA. Forms an heterotetrameric complex with RFC2, RFC3 and RFC4; this complex has ATPase activity but is not stimulated by PCNA. The heterotetramer of subunits RFC2, RFC3, RFC4 and RFC5 interacts with RAD17.

The protein resides in the nucleus. Functionally, subunit of the replication factor C (RFC) complex which acts during elongation of primed DNA templates by DNA polymerases delta and epsilon, and is necessary for ATP-dependent loading of proliferating cell nuclear antigen (PCNA) onto primed DNA. In Homo sapiens (Human), this protein is Replication factor C subunit 5 (RFC5).